A 266-amino-acid polypeptide reads, in one-letter code: Signal peptidase I (266 aa).

Over 1 to 20 (MQTDNTKSNTNKTAKQEWGS) the chain is Cytoplasmic. A helical transmembrane segment spans residues 21–41 (FAFVICIALLIRILIMEPFNV). The Extracellular portion of the chain corresponds to 42-266 (PTGSMKATIL…IFRNLYNTDA (225 aa)). Active-site residues include serine 45 and lysine 108.

The protein belongs to the peptidase S26 family.

The protein localises to the cell membrane. The enzyme catalyses Cleavage of hydrophobic, N-terminal signal or leader sequences from secreted and periplasmic proteins.. In Rickettsia conorii (strain ATCC VR-613 / Malish 7), this protein is Signal peptidase I (lepB).